Here is a 312-residue protein sequence, read N- to C-terminus: Porphobilinogen deaminase (312 aa).

Position 241 is an S-(dipyrrolylmethanemethyl)cysteine (cysteine 241).

Belongs to the HMBS family. As to quaternary structure, monomer. Dipyrromethane serves as cofactor.

The catalysed reaction is 4 porphobilinogen + H2O = hydroxymethylbilane + 4 NH4(+). Its pathway is porphyrin-containing compound metabolism; protoporphyrin-IX biosynthesis; coproporphyrinogen-III from 5-aminolevulinate: step 2/4. It participates in porphyrin-containing compound metabolism; chlorophyll biosynthesis. Its function is as follows. Tetrapolymerization of the monopyrrole PBG into the hydroxymethylbilane pre-uroporphyrinogen in several discrete steps. This is Porphobilinogen deaminase (hemC) from Chlorobaculum parvum (strain DSM 263 / NCIMB 8327) (Chlorobium vibrioforme subsp. thiosulfatophilum).